Here is a 468-residue protein sequence, read N- to C-terminus: GTPase Der (468 aa).

EngA-type G domains are found at residues 3–169 (PVMA…SPPD) and 199–372 (IRLA…KAAT). Residues 9 to 16 (GRANVGKS), 56 to 60 (DTGGF), 119 to 122 (NKAE), 205 to 212 (GRPNVGKS), 252 to 256 (DTAGL), and 317 to 320 (NKWD) contribute to the GTP site. The KH-like domain maps to 373–457 (CKMSTPVLTR…PLRIELKTSH (85 aa)).

Belongs to the TRAFAC class TrmE-Era-EngA-EngB-Septin-like GTPase superfamily. EngA (Der) GTPase family. Associates with the 50S ribosomal subunit.

GTPase that plays an essential role in the late steps of ribosome biogenesis. In Verminephrobacter eiseniae (strain EF01-2), this protein is GTPase Der.